Here is an 835-residue protein sequence, read N- to C-terminus: Ribosome-releasing factor 2, mitochondrial (835 aa).

A mitochondrion-targeting transit peptide spans 1–50 (MPWCNTRLRTCGASPKIFLRRVRCPVLLHNWTIGRVSSVSKMILRFLRSY). The 287-residue stretch at 57–343 (TRVRNIGIIA…AVVDYLPSPA (287 aa)) folds into the tr-type G domain. GTP-binding positions include 66–73 (AHIDAGKT), 131–135 (DTPGH), and 183–186 (NKMD).

It belongs to the TRAFAC class translation factor GTPase superfamily. Classic translation factor GTPase family. EF-G/EF-2 subfamily.

Its subcellular location is the mitochondrion. Its function is as follows. Mitochondrial GTPase that mediates the disassembly of ribosomes from messenger RNA at the termination of mitochondrial protein biosynthesis. Not involved in the GTP-dependent ribosomal translocation step during translation elongation. The polypeptide is Ribosome-releasing factor 2, mitochondrial (Eremothecium gossypii (strain ATCC 10895 / CBS 109.51 / FGSC 9923 / NRRL Y-1056) (Yeast)).